The following is a 583-amino-acid chain: Putative amidase C869.01 (583 aa).

Residues 1-19 form the signal peptide; that stretch reads MKLQLLFLTLAQLAKHGLA. Residues Lys141 and Ser222 each act as charge relay system in the active site. Ser246 acts as the Acyl-ester intermediate in catalysis.

This sequence belongs to the amidase family.

It is found in the cytoplasm. The enzyme catalyses a monocarboxylic acid amide + H2O = a monocarboxylate + NH4(+). The sequence is that of Putative amidase C869.01 from Schizosaccharomyces pombe (strain 972 / ATCC 24843) (Fission yeast).